Consider the following 305-residue polypeptide: tRNA pseudouridine synthase B (305 aa).

The active-site Nucleophile is aspartate 39.

This sequence belongs to the pseudouridine synthase TruB family. Type 1 subfamily.

The catalysed reaction is uridine(55) in tRNA = pseudouridine(55) in tRNA. Its function is as follows. Responsible for synthesis of pseudouridine from uracil-55 in the psi GC loop of transfer RNAs. This Staphylococcus aureus (strain Newman) protein is tRNA pseudouridine synthase B.